Here is a 108-residue protein sequence, read N- to C-terminus: Protein YcgL (108 aa).

One can recognise a YcgL domain in the interval Met-12 to Leu-96.

This Escherichia coli O9:H4 (strain HS) protein is Protein YcgL.